A 325-amino-acid chain; its full sequence is Fiber protein (325 aa).

This sequence belongs to the adenoviridae fiber family. As to quaternary structure, homotrimer. Interacts with host receptor CD46. Interacts (via N-terminal tail region) with pentons.

It localises to the virion. The protein localises to the host nucleus. Functionally, forms spikes that protrude from each vertex of the icosahedral capsid. Interacts with host receptor CD46 to provide virion initial attachment to target cell. Fiber proteins are shed during virus entry, when virus is still at the cell surface. This Human adenovirus B serotype 11 (strain BC34) (HAdV-11) protein is Fiber protein.